The sequence spans 357 residues: DNA replication and repair protein RecF (357 aa).

31 to 38 is a binding site for ATP; it reads GQNGAGKT.

Belongs to the RecF family.

It is found in the cytoplasm. Its function is as follows. The RecF protein is involved in DNA metabolism; it is required for DNA replication and normal SOS inducibility. RecF binds preferentially to single-stranded, linear DNA. It also seems to bind ATP. The sequence is that of DNA replication and repair protein RecF from Coxiella burnetii (strain Dugway 5J108-111).